A 311-amino-acid polypeptide reads, in one-letter code: MSVLVKEVIEKLRLDIVYGEPELLEKEINTADITRPGLEMTGYFDYYTPERIQLLGMKEWSYLISMPSNSRYEVLKKMFLPETPAVIVARGLVVPEEMLKAARECKIAILTSRAATSRLSGELSSYLDSRLAERTSVHGVLMDIYGMGVLIQGDSGIGKSETGLELVKRGHRLVADDRVDIFAKDEITLWGEPAEILKHLIEIRGVGIIDVMSLYGASAVKDSSQVQLAVYLENYDTHKTFDRLGNNAEELEVSGVAIPRIRIPVKTGRNISVVIEAAAMNYRAKEMGFDATRLFDERLTSLIARNEVQNA.

Active-site residues include histidine 138 and lysine 159. 153–160 is a binding site for ATP; the sequence is GDSGIGKS. Position 160 (serine 160) interacts with Mg(2+). Aspartate 177 serves as the catalytic Proton acceptor; for phosphorylation activity. Proton donor; for dephosphorylation activity. Positions 201 to 210 are important for the catalytic mechanism of both phosphorylation and dephosphorylation; that stretch reads IEIRGVGIID. Mg(2+) is bound at residue glutamate 202. Arginine 243 is an active-site residue. The important for the catalytic mechanism of dephosphorylation stretch occupies residues 264-269; the sequence is PVKTGR.

Belongs to the HPrK/P family. Homohexamer. The cofactor is Mg(2+).

The catalysed reaction is [HPr protein]-L-serine + ATP = [HPr protein]-O-phospho-L-serine + ADP + H(+). It carries out the reaction [HPr protein]-O-phospho-L-serine + phosphate + H(+) = [HPr protein]-L-serine + diphosphate. Catalyzes the ATP- as well as the pyrophosphate-dependent phosphorylation of a specific serine residue in HPr, a phosphocarrier protein of the phosphoenolpyruvate-dependent sugar phosphotransferase system (PTS). HprK/P also catalyzes the pyrophosphate-producing, inorganic phosphate-dependent dephosphorylation (phosphorolysis) of seryl-phosphorylated HPr (P-Ser-HPr). The two antagonistic activities of HprK/P are regulated by several intracellular metabolites, which change their concentration in response to the absence or presence of rapidly metabolisable carbon sources (glucose, fructose, etc.) in the growth medium. Therefore, by controlling the phosphorylation state of HPr, HPrK/P is a sensor enzyme that plays a major role in the regulation of carbon metabolism and sugar transport: it mediates carbon catabolite repression (CCR), and regulates PTS-catalyzed carbohydrate uptake and inducer exclusion. This is HPr kinase/phosphorylase from Streptococcus pneumoniae (strain 70585).